A 308-amino-acid chain; its full sequence is D-alanine--D-alanine ligase (308 aa).

In terms of domain architecture, ATP-grasp spans 105-302; the sequence is KAIFRSLGLA…FPDLCERILD (198 aa). 133–188 lines the ATP pocket; that stretch reads DLPFGLPCVVKPAGEGSSVGVHLVNEAAELGPACRDAASHAGDVIVERYVKGTEVD. Mg(2+) contacts are provided by D256, E269, and N271.

Belongs to the D-alanine--D-alanine ligase family. It depends on Mg(2+) as a cofactor. The cofactor is Mn(2+).

The protein localises to the cytoplasm. It catalyses the reaction 2 D-alanine + ATP = D-alanyl-D-alanine + ADP + phosphate + H(+). The protein operates within cell wall biogenesis; peptidoglycan biosynthesis. In terms of biological role, cell wall formation. The polypeptide is D-alanine--D-alanine ligase (Anaeromyxobacter dehalogenans (strain 2CP-1 / ATCC BAA-258)).